The chain runs to 1503 residues: Dynein axonemal assembly factor 1 homolog (1503 aa).

LRR repeat units lie at residues R34–T56, E57–G78, K79–R100, E101–I122, V125–I146, and T150–E171. The 39-residue stretch at P185 to W223 folds into the LRRCT domain. 4 disordered regions span residues S249 to C280, E305 to Q328, D956 to E1033, and S1295 to E1315. Residues T973–Y985 show a composition bias toward acidic residues. The segment covering Q1014–H1031 has biased composition (basic and acidic residues). Low complexity predominate over residues T1303–S1314.

It belongs to the DNAAF1 family.

Its subcellular location is the cell projection. It is found in the cilium. Functionally, cilium-specific protein required for cilia structures. This Drosophila erecta (Fruit fly) protein is Dynein axonemal assembly factor 1 homolog (dtr).